Consider the following 211-residue polypeptide: MQAILAAAMAAQTLLFSATAPPASLFQSPSSARPFHSLRLAAGPAGAAAARALVVADATKKAVAVLKGTSQVEGVVTLTQDDQGPTTVNVRVTGLTPGLHGFHLHEFGDTTNGCISTGPHFNPNNLTHGAPEDEVRHAGDLGNIVANAEGVAEATIVDKQIPLSGPNSVVGRAFVVHELEDDLGKGGHELSLSTGNAGGRLACGVVGLTPL.

A chloroplast-targeting transit peptide spans 1–57 (MQAILAAAMAAQTLLFSATAPPASLFQSPSSARPFHSLRLAAGPAGAAAARALVVAD). 3 residues coordinate Cu cation: H103, H105, and H120. C114 and C203 are joined by a disulfide. Zn(2+) is bound by residues H120, H128, H137, and D140. Residue H177 participates in Cu cation binding.

This sequence belongs to the Cu-Zn superoxide dismutase family. As to quaternary structure, homotetramer. Cu cation serves as cofactor. It depends on Zn(2+) as a cofactor.

Its subcellular location is the plastid. The protein localises to the chloroplast. The catalysed reaction is 2 superoxide + 2 H(+) = H2O2 + O2. Functionally, destroys radicals which are normally produced within the cells and which are toxic to biological systems. The polypeptide is Superoxide dismutase [Cu-Zn], chloroplastic (SODCP) (Oryza sativa subsp. japonica (Rice)).